Here is a 337-residue protein sequence, read N- to C-terminus: Casein kinase I isoform alpha (337 aa).

In terms of domain architecture, Protein kinase spans 17 to 285; it reads YKLVRKIGSG…YLRQLFRILF (269 aa). ATP contacts are provided by residues 23-31 and K46; that span reads IGSGSFGDI. Residue D136 is the Proton acceptor of the active site. Low complexity predominate over residues 309-325; it reads AASSSGQGQQAQTPTGK. The segment at 309–337 is disordered; the sequence is AASSSGQGQQAQTPTGKQTDKSKSNMKGF.

Belongs to the protein kinase superfamily. CK1 Ser/Thr protein kinase family. Casein kinase I subfamily. In terms of processing, autophosphorylated.

It is found in the cytoplasm. The protein localises to the cytoskeleton. It localises to the microtubule organizing center. Its subcellular location is the centrosome. The protein resides in the chromosome. It is found in the centromere. The protein localises to the kinetochore. It localises to the nucleus speckle. Its subcellular location is the cilium basal body. The protein resides in the spindle. The catalysed reaction is L-seryl-[protein] + ATP = O-phospho-L-seryl-[protein] + ADP + H(+). The enzyme catalyses L-threonyl-[protein] + ATP = O-phospho-L-threonyl-[protein] + ADP + H(+). Casein kinases are operationally defined by their preferential utilization of acidic proteins such as caseins as substrates. It can phosphorylate a large number of proteins. Participates in Wnt signaling. May play a role in segregating chromosomes during mitosis. May play a role in keratin cytoskeleton disassembly. This Gallus gallus (Chicken) protein is Casein kinase I isoform alpha (CSNK1A1).